Here is a 202-residue protein sequence, read N- to C-terminus: Crossover junction endodeoxyribonuclease RuvC (202 aa).

Catalysis depends on residues Asp7, Glu68, and Asp141. Mg(2+)-binding residues include Asp7, Glu68, and Asp141.

It belongs to the RuvC family. In terms of assembly, homodimer which binds Holliday junction (HJ) DNA. The HJ becomes 2-fold symmetrical on binding to RuvC with unstacked arms; it has a different conformation from HJ DNA in complex with RuvA. In the full resolvosome a probable DNA-RuvA(4)-RuvB(12)-RuvC(2) complex forms which resolves the HJ. Mg(2+) is required as a cofactor.

Its subcellular location is the cytoplasm. It carries out the reaction Endonucleolytic cleavage at a junction such as a reciprocal single-stranded crossover between two homologous DNA duplexes (Holliday junction).. Functionally, the RuvA-RuvB-RuvC complex processes Holliday junction (HJ) DNA during genetic recombination and DNA repair. Endonuclease that resolves HJ intermediates. Cleaves cruciform DNA by making single-stranded nicks across the HJ at symmetrical positions within the homologous arms, yielding a 5'-phosphate and a 3'-hydroxyl group; requires a central core of homology in the junction. The consensus cleavage sequence is 5'-(A/T)TT(C/G)-3'. Cleavage occurs on the 3'-side of the TT dinucleotide at the point of strand exchange. HJ branch migration catalyzed by RuvA-RuvB allows RuvC to scan DNA until it finds its consensus sequence, where it cleaves and resolves the cruciform DNA. This is Crossover junction endodeoxyribonuclease RuvC from Clavibacter michiganensis subsp. michiganensis (strain NCPPB 382).